The chain runs to 717 residues: Ribosomal RNA large subunit methyltransferase K/L (717 aa).

In terms of domain architecture, THUMP spans 45–142 (GAYRICLGSR…DKRSGVQTVQ (98 aa)).

Belongs to the methyltransferase superfamily. RlmKL family.

It localises to the cytoplasm. The catalysed reaction is guanosine(2445) in 23S rRNA + S-adenosyl-L-methionine = N(2)-methylguanosine(2445) in 23S rRNA + S-adenosyl-L-homocysteine + H(+). It carries out the reaction guanosine(2069) in 23S rRNA + S-adenosyl-L-methionine = N(2)-methylguanosine(2069) in 23S rRNA + S-adenosyl-L-homocysteine + H(+). Specifically methylates the guanine in position 2445 (m2G2445) and the guanine in position 2069 (m7G2069) of 23S rRNA. This is Ribosomal RNA large subunit methyltransferase K/L from Hahella chejuensis (strain KCTC 2396).